A 90-amino-acid polypeptide reads, in one-letter code: Large ribosomal subunit protein eL33 (90 aa).

This sequence belongs to the eukaryotic ribosomal protein eL33 family.

In Methanopyrus kandleri (strain AV19 / DSM 6324 / JCM 9639 / NBRC 100938), this protein is Large ribosomal subunit protein eL33.